The sequence spans 353 residues: NADH-quinone oxidoreductase subunit H (353 aa).

Transmembrane regions (helical) follow at residues 8 to 28 (LLVY…LFIW), 75 to 95 (GVFW…FAAI), 108 to 128 (IGIL…FMAG), 148 to 168 (VSYE…TGSL), 178 to 198 (SVPF…AAMA), 229 to 249 (LFYL…TTLF), 258 to 278 (LHPV…IIWV), 297 to 317 (FLLP…LAAP), and 319 to 339 (MNTA…ILLF).

It belongs to the complex I subunit 1 family. In terms of assembly, NDH-1 is composed of 14 different subunits. Subunits NuoA, H, J, K, L, M, N constitute the membrane sector of the complex.

The protein localises to the cell membrane. It catalyses the reaction a quinone + NADH + 5 H(+)(in) = a quinol + NAD(+) + 4 H(+)(out). NDH-1 shuttles electrons from NADH, via FMN and iron-sulfur (Fe-S) centers, to quinones in the respiratory chain. The immediate electron acceptor for the enzyme in this species is believed to be ubiquinone. Couples the redox reaction to proton translocation (for every two electrons transferred, four hydrogen ions are translocated across the cytoplasmic membrane), and thus conserves the redox energy in a proton gradient. This subunit may bind ubiquinone. The chain is NADH-quinone oxidoreductase subunit H from Dehalococcoides mccartyi (strain ATCC BAA-2266 / KCTC 15142 / 195) (Dehalococcoides ethenogenes (strain 195)).